Consider the following 339-residue polypeptide: Biotin synthase (339 aa).

The Radical SAM core domain occupies 47–276 (FYGKKVKLNM…SKEIRISGGR (230 aa)). Residues Cys-65, Cys-69, and Cys-72 each contribute to the [4Fe-4S] cluster site. [2Fe-2S] cluster is bound by residues Cys-109, Cys-141, Cys-201, and Arg-271.

Belongs to the radical SAM superfamily. Biotin synthase family. In terms of assembly, homodimer. It depends on [4Fe-4S] cluster as a cofactor. [2Fe-2S] cluster serves as cofactor.

The enzyme catalyses (4R,5S)-dethiobiotin + (sulfur carrier)-SH + 2 reduced [2Fe-2S]-[ferredoxin] + 2 S-adenosyl-L-methionine = (sulfur carrier)-H + biotin + 2 5'-deoxyadenosine + 2 L-methionine + 2 oxidized [2Fe-2S]-[ferredoxin]. The protein operates within cofactor biosynthesis; biotin biosynthesis; biotin from 7,8-diaminononanoate: step 2/2. Catalyzes the conversion of dethiobiotin (DTB) to biotin by the insertion of a sulfur atom into dethiobiotin via a radical-based mechanism. The chain is Biotin synthase from Bacillus velezensis (strain DSM 23117 / BGSC 10A6 / LMG 26770 / FZB42) (Bacillus amyloliquefaciens subsp. plantarum).